Reading from the N-terminus, the 97-residue chain is DNA-binding protein HU (97 aa).

It belongs to the bacterial histone-like protein family. Has been isolated in complexes with 5S rRNA and bL25, and with 5S rRNA, bL25 and uL5. Homodimer.

In terms of biological role, histone-like DNA-binding protein which is capable of wrapping DNA to stabilize it, and thus to prevent its denaturation under extreme environmental conditions. This is DNA-binding protein HU from Thermus thermophilus (strain ATCC 27634 / DSM 579 / HB8).